Here is a 316-residue protein sequence, read N- to C-terminus: Pantothenate kinase (316 aa).

Position 95-102 (Gly95–Ser102) interacts with ATP.

The protein belongs to the prokaryotic pantothenate kinase family.

It localises to the cytoplasm. The catalysed reaction is (R)-pantothenate + ATP = (R)-4'-phosphopantothenate + ADP + H(+). The protein operates within cofactor biosynthesis; coenzyme A biosynthesis; CoA from (R)-pantothenate: step 1/5. In Klebsiella pneumoniae (strain 342), this protein is Pantothenate kinase.